The following is a 117-amino-acid chain: uncharacterized protein (117 aa).

The helical transmembrane segment at 1 to 21 (MEIAIIALFIVSIALIAFSYS) threads the bilayer. The stretch at 38 to 67 (LSAMQEIYKLKKKMTVLEEELLETNLVIRK) forms a coiled coil.

It localises to the cell membrane. This is an uncharacterized protein from Bacillus subtilis (strain 168).